The primary structure comprises 364 residues: Anthranilate phosphoribosyltransferase (364 aa).

5-phospho-alpha-D-ribose 1-diphosphate contacts are provided by residues G101, 104-105, T109, 111-114, 129-137, and G141; these read GD, NLST, and KHGNRAASS. G101 is a binding site for anthranilate. S113 is a binding site for Mg(2+). N132 provides a ligand contact to anthranilate. Anthranilate is bound at residue R187. Mg(2+)-binding residues include D245 and E246.

The protein belongs to the anthranilate phosphoribosyltransferase family. Homodimer. Mg(2+) serves as cofactor.

The enzyme catalyses N-(5-phospho-beta-D-ribosyl)anthranilate + diphosphate = 5-phospho-alpha-D-ribose 1-diphosphate + anthranilate. The protein operates within amino-acid biosynthesis; L-tryptophan biosynthesis; L-tryptophan from chorismate: step 2/5. Its function is as follows. Catalyzes the transfer of the phosphoribosyl group of 5-phosphorylribose-1-pyrophosphate (PRPP) to anthranilate to yield N-(5'-phosphoribosyl)-anthranilate (PRA). The sequence is that of Anthranilate phosphoribosyltransferase from Mycolicibacterium vanbaalenii (strain DSM 7251 / JCM 13017 / BCRC 16820 / KCTC 9966 / NRRL B-24157 / PYR-1) (Mycobacterium vanbaalenii).